The chain runs to 95 residues: UPF0473 protein CD630_12860 (95 aa).

The protein belongs to the UPF0473 family.

The polypeptide is UPF0473 protein CD630_12860 (Clostridioides difficile (strain 630) (Peptoclostridium difficile)).